The following is a 334-amino-acid chain: Phosphate acyltransferase (334 aa).

It belongs to the PlsX family. As to quaternary structure, homodimer. Probably interacts with PlsY.

It is found in the cytoplasm. It catalyses the reaction a fatty acyl-[ACP] + phosphate = an acyl phosphate + holo-[ACP]. It functions in the pathway lipid metabolism; phospholipid metabolism. Functionally, catalyzes the reversible formation of acyl-phosphate (acyl-PO(4)) from acyl-[acyl-carrier-protein] (acyl-ACP). This enzyme utilizes acyl-ACP as fatty acyl donor, but not acyl-CoA. The chain is Phosphate acyltransferase from Mycoplasma capricolum subsp. capricolum (strain California kid / ATCC 27343 / NCTC 10154).